The primary structure comprises 238 residues: Cysteine-rich venom protein kaouthin-2 (238 aa).

The N-terminal stretch at 1–19 (MIAFIVLLSLAAVLQQSSG) is a signal peptide. Residues 20–25 (TVDFAS) constitute a propeptide that is removed on maturation. The SCP domain occupies 38–164 (VDKHNALRRS…SSKYLYVCQY (127 aa)). Cystine bridges form between cysteine 75-cysteine 153, cysteine 92-cysteine 165, cysteine 148-cysteine 162, cysteine 184-cysteine 191, cysteine 187-cysteine 196, cysteine 200-cysteine 233, cysteine 209-cysteine 227, and cysteine 218-cysteine 231. The ShKT domain maps to 200 to 233 (CKHHNVFSNCQSLAKQNACQTEWMKSKCAASCFC).

As to expression, expressed by the venom gland.

The protein localises to the secreted. The polypeptide is Cysteine-rich venom protein kaouthin-2 (Naja kaouthia (Monocled cobra)).